The primary structure comprises 496 residues: Glutamyl-tRNA(Gln) amidotransferase subunit B, organellar chromatophore (496 aa).

The protein belongs to the GatB/GatE family. GatB subfamily. As to quaternary structure, subunit of the heterotrimeric GatCAB amidotransferase (AdT) complex, composed of A, B and C subunits.

It is found in the plastid. The protein resides in the organellar chromatophore. It carries out the reaction L-glutamyl-tRNA(Gln) + L-glutamine + ATP + H2O = L-glutaminyl-tRNA(Gln) + L-glutamate + ADP + phosphate + H(+). Functionally, allows the formation of correctly charged Gln-tRNA(Gln) through the transamidation of misacylated Glu-tRNA(Gln). The reaction takes place in the presence of glutamine and ATP through an activated gamma-phospho-Glu-tRNA(Gln). The polypeptide is Glutamyl-tRNA(Gln) amidotransferase subunit B, organellar chromatophore (Paulinella chromatophora).